The chain runs to 688 residues: UvrABC system protein B (688 aa).

The Helicase ATP-binding domain maps to 31–188 (GRVNAGEPDV…RKFVSMQYQR (158 aa)). Residue 44-51 (GATGTGKS) participates in ATP binding. Residues 97–120 (YYDYYQPEAYVPQTDTFIEKDSSV) carry the Beta-hairpin motif. The 154-residue stretch at 434-587 (QIDDLLEQIR…QVAYNTEHGI (154 aa)) folds into the Helicase C-terminal domain. The interval 607–632 (GEDTKKMLEGRGGGKRSPTPNLRREG) is disordered. One can recognise a UVR domain in the interval 642-677 (ETIISDLNDQMLQAAGELKFELAARLRDELGDLKRE).

This sequence belongs to the UvrB family. In terms of assembly, forms a heterotetramer with UvrA during the search for lesions. Interacts with UvrC in an incision complex.

The protein localises to the cytoplasm. The UvrABC repair system catalyzes the recognition and processing of DNA lesions. A damage recognition complex composed of 2 UvrA and 2 UvrB subunits scans DNA for abnormalities. Upon binding of the UvrA(2)B(2) complex to a putative damaged site, the DNA wraps around one UvrB monomer. DNA wrap is dependent on ATP binding by UvrB and probably causes local melting of the DNA helix, facilitating insertion of UvrB beta-hairpin between the DNA strands. Then UvrB probes one DNA strand for the presence of a lesion. If a lesion is found the UvrA subunits dissociate and the UvrB-DNA preincision complex is formed. This complex is subsequently bound by UvrC and the second UvrB is released. If no lesion is found, the DNA wraps around the other UvrB subunit that will check the other stand for damage. This chain is UvrABC system protein B, found in Clavibacter sepedonicus (Clavibacter michiganensis subsp. sepedonicus).